Reading from the N-terminus, the 638-residue chain is 1-deoxy-D-xylulose-5-phosphate synthase (638 aa).

Thiamine diphosphate is bound by residues His78 and 119 to 121 (AHS). Asp150 is a Mg(2+) binding site. Residues 151-152 (GS), Asn179, Tyr288, and Glu370 contribute to the thiamine diphosphate site. Residue Asn179 participates in Mg(2+) binding.

The protein belongs to the transketolase family. DXPS subfamily. Homodimer. Mg(2+) is required as a cofactor. The cofactor is thiamine diphosphate.

It carries out the reaction D-glyceraldehyde 3-phosphate + pyruvate + H(+) = 1-deoxy-D-xylulose 5-phosphate + CO2. It participates in metabolic intermediate biosynthesis; 1-deoxy-D-xylulose 5-phosphate biosynthesis; 1-deoxy-D-xylulose 5-phosphate from D-glyceraldehyde 3-phosphate and pyruvate: step 1/1. In terms of biological role, catalyzes the acyloin condensation reaction between C atoms 2 and 3 of pyruvate and glyceraldehyde 3-phosphate to yield 1-deoxy-D-xylulose-5-phosphate (DXP). This chain is 1-deoxy-D-xylulose-5-phosphate synthase, found in Brucella anthropi (strain ATCC 49188 / DSM 6882 / CCUG 24695 / JCM 21032 / LMG 3331 / NBRC 15819 / NCTC 12168 / Alc 37) (Ochrobactrum anthropi).